The primary structure comprises 758 residues: Xaa-Pro dipeptidyl-peptidase (758 aa).

Residues S349, D469, and H499 each act as charge relay system in the active site.

Belongs to the peptidase S15 family. Homodimer.

The protein resides in the cytoplasm. The enzyme catalyses Hydrolyzes Xaa-Pro-|- bonds to release unblocked, N-terminal dipeptides from substrates including Ala-Pro-|-p-nitroanilide and (sequentially) Tyr-Pro-|-Phe-Pro-|-Gly-Pro-|-Ile.. Functionally, removes N-terminal dipeptides sequentially from polypeptides having unsubstituted N-termini provided that the penultimate residue is proline. This chain is Xaa-Pro dipeptidyl-peptidase, found in Streptococcus uberis (strain ATCC BAA-854 / 0140J).